A 264-amino-acid polypeptide reads, in one-letter code: uncharacterized protein (264 aa).

This is an uncharacterized protein from Escherichia coli (strain K12).